A 526-amino-acid polypeptide reads, in one-letter code: Protein spinster homolog 1 (526 aa).

The disordered stretch occupies residues 1-44; sequence MTSRRSHGDVTPFLTQADNTEEEGVRDPESQSSDEEEEEGKDHG. A run of 12 helical transmembrane segments spans residues 59–79, 98–118, 126–146, 159–179, 187–207, 218–238, 272–292, 321–341, 355–375, 384–404, 419–439, and 463–483; these read VIIV…RFTV, GLVQ…FGYL, LIMC…SFVS, LVGV…ADLF, MLSF…IVGS, WALR…IFVA, FILS…LALW, MIFG…GVEI, LVCA…LAFA, VFIF…ADIL, LQIV…IGVI, and MICA…ALFI.

The protein belongs to the major facilitator superfamily. Spinster (TC 2.A.1.49) family.

Its subcellular location is the lysosome membrane. The enzyme catalyses a 1-acyl-sn-glycero-3-phosphocholine(out) + H(+)(out) = a 1-acyl-sn-glycero-3-phosphocholine(in) + H(+)(in). It catalyses the reaction a 1-acyl-sn-glycero-3-phosphoethanolamine(out) + H(+)(out) = a 1-acyl-sn-glycero-3-phosphoethanolamine(in) + H(+)(in). It carries out the reaction a 1-O-(1Z-alkenyl)-sn-glycero-3-phosphocholine(out) + H(+)(out) = a 1-O-(1Z-alkenyl)-sn-glycero-3-phosphocholine(in) + H(+)(in). The catalysed reaction is a 1-O-(1Z-alkenyl)-sn-glycero-3-phosphoethanolamine(out) + H(+)(out) = a 1-O-(1Z-alkenyl)-sn-glycero-3-phosphoethanolamine(in) + H(+)(in). Functionally, mediates the rate-limiting, proton-dependent, lysosomal efflux of lysophospholipids. Selective for zwitterionic headgroups such as lysophosphatidylcholine (LPC) and lysophosphatidylethanolamine (LPE). Essential player in lysosomal homeostasis. This Xenopus laevis (African clawed frog) protein is Protein spinster homolog 1 (spns1).